We begin with the raw amino-acid sequence, 418 residues long: NADH-quinone oxidoreductase subunit D (418 aa).

The protein belongs to the complex I 49 kDa subunit family. NDH-1 is composed of 14 different subunits. Subunits NuoB, C, D, E, F, and G constitute the peripheral sector of the complex.

It is found in the cell inner membrane. It catalyses the reaction a quinone + NADH + 5 H(+)(in) = a quinol + NAD(+) + 4 H(+)(out). In terms of biological role, NDH-1 shuttles electrons from NADH, via FMN and iron-sulfur (Fe-S) centers, to quinones in the respiratory chain. The immediate electron acceptor for the enzyme in this species is believed to be ubiquinone. Couples the redox reaction to proton translocation (for every two electrons transferred, four hydrogen ions are translocated across the cytoplasmic membrane), and thus conserves the redox energy in a proton gradient. The sequence is that of NADH-quinone oxidoreductase subunit D from Bordetella bronchiseptica (strain ATCC BAA-588 / NCTC 13252 / RB50) (Alcaligenes bronchisepticus).